A 425-amino-acid polypeptide reads, in one-letter code: Serine--tRNA ligase (425 aa).

Thr230–Glu232 serves as a coordination point for L-serine. An ATP-binding site is contributed by Arg261–Glu263. Glu284 is a binding site for L-serine. Position 348–351 (Glu348–Ser351) interacts with ATP. Ser384 lines the L-serine pocket.

The protein belongs to the class-II aminoacyl-tRNA synthetase family. Type-1 seryl-tRNA synthetase subfamily. In terms of assembly, homodimer. The tRNA molecule binds across the dimer.

Its subcellular location is the cytoplasm. It catalyses the reaction tRNA(Ser) + L-serine + ATP = L-seryl-tRNA(Ser) + AMP + diphosphate + H(+). The catalysed reaction is tRNA(Sec) + L-serine + ATP = L-seryl-tRNA(Sec) + AMP + diphosphate + H(+). It participates in aminoacyl-tRNA biosynthesis; selenocysteinyl-tRNA(Sec) biosynthesis; L-seryl-tRNA(Sec) from L-serine and tRNA(Sec): step 1/1. Functionally, catalyzes the attachment of serine to tRNA(Ser). Is also able to aminoacylate tRNA(Sec) with serine, to form the misacylated tRNA L-seryl-tRNA(Sec), which will be further converted into selenocysteinyl-tRNA(Sec). The protein is Serine--tRNA ligase of Desulforudis audaxviator (strain MP104C).